Here is a 344-residue protein sequence, read N- to C-terminus: Lipase chaperone (344 aa).

Residues 13–35 (RIAPYGAAGLAAIVGVAIWSGTG) form a helical membrane-spanning segment.

Belongs to the lipase chaperone family.

It localises to the cell inner membrane. In terms of biological role, may be involved in the folding of the extracellular lipase during its passage through the periplasm. The chain is Lipase chaperone from Burkholderia vietnamiensis (strain G4 / LMG 22486) (Burkholderia cepacia (strain R1808)).